Reading from the N-terminus, the 370-residue chain is Probable aspartic-type endopeptidase ARB_04018 (370 aa).

The first 21 residues, 1–21 (MWHSPFSTAFTLFLGFFTLTL), serve as a signal peptide directing secretion. Asparagine 80 and asparagine 102 each carry an N-linked (GlcNAc...) asparagine glycan. Positions 94–367 (FVNEITIGND…DHDGPKMGFA (274 aa)) constitute a Peptidase A1 domain. The active site involves aspartate 110. A glycan (N-linked (GlcNAc...) asparagine) is linked at asparagine 251. Aspartate 261 is an active-site residue. Asparagine 298 carries an N-linked (GlcNAc...) asparagine glycan.

This sequence belongs to the peptidase A1 family.

The protein localises to the secreted. Probable aspartic-type endopeptidase which contributes to virulence. The chain is Probable aspartic-type endopeptidase ARB_04018 from Arthroderma benhamiae (strain ATCC MYA-4681 / CBS 112371) (Trichophyton mentagrophytes).